The following is a 239-amino-acid chain: uncharacterized protein (239 aa).

The tract at residues 193–214 is disordered; that stretch reads RKRKLNLSDGENKAKSPYSSIS.

Its subcellular location is the nucleus. This is an uncharacterized protein from Schizosaccharomyces pombe (strain 972 / ATCC 24843) (Fission yeast).